Here is a 62-residue protein sequence, read N- to C-terminus: Large ribosomal subunit protein eL37 (62 aa).

C20, C23, C35, and C38 together coordinate Zn(2+). Residues 20 to 38 (CRRCGRHAFNVAKGYCAAC) form a C4-type zinc finger.

Belongs to the eukaryotic ribosomal protein eL37 family. Zn(2+) serves as cofactor.

In terms of biological role, binds to the 23S rRNA. This is Large ribosomal subunit protein eL37 from Staphylothermus marinus (strain ATCC 43588 / DSM 3639 / JCM 9404 / F1).